A 975-amino-acid polypeptide reads, in one-letter code: Glycine dehydrogenase (decarboxylating) (975 aa).

At Lys723 the chain carries N6-(pyridoxal phosphate)lysine.

It belongs to the GcvP family. The glycine cleavage system is composed of four proteins: P, T, L and H. Requires pyridoxal 5'-phosphate as cofactor.

The enzyme catalyses N(6)-[(R)-lipoyl]-L-lysyl-[glycine-cleavage complex H protein] + glycine + H(+) = N(6)-[(R)-S(8)-aminomethyldihydrolipoyl]-L-lysyl-[glycine-cleavage complex H protein] + CO2. The glycine cleavage system catalyzes the degradation of glycine. The P protein binds the alpha-amino group of glycine through its pyridoxal phosphate cofactor; CO(2) is released and the remaining methylamine moiety is then transferred to the lipoamide cofactor of the H protein. This is Glycine dehydrogenase (decarboxylating) from Burkholderia mallei (strain NCTC 10247).